The following is a 188-amino-acid chain: Probable manganese efflux pump MntP (188 aa).

The next 6 membrane-spanning stretches (helical) occupy residues 3–23, 41–61, 66–86, 106–128, 143–163, and 168–188; these read FTATVLLAFGMSMDAFAASIG, LIFGAVETLTPLIGWGLGILA, LEWNHWIAFVLLIFLGGRMII, WLLVTTAIATSLDAMAVGVGLAF, ATLIMSTLGMMIGRFIGPMLG, and ILGGVVLIGIGVQILWTHFHG.

The protein belongs to the MntP (TC 9.B.29) family.

Its subcellular location is the cell inner membrane. Its function is as follows. Probably functions as a manganese efflux pump. The protein is Probable manganese efflux pump MntP of Salmonella typhimurium (strain LT2 / SGSC1412 / ATCC 700720).